The following is a 255-amino-acid chain: Vitamin B12 import ATP-binding protein BtuD (255 aa).

The region spanning 2–240 (MRVKHIAVGS…AGLAEVFKTQ (239 aa)) is the ABC transporter domain. An ATP-binding site is contributed by 30 to 37 (GPNGSGKS).

The protein belongs to the ABC transporter superfamily. Vitamin B12 importer (TC 3.A.1.13.1) family. The complex is composed of two ATP-binding proteins (BtuD), two transmembrane proteins (BtuC) and a solute-binding protein (BtuF).

Its subcellular location is the cell inner membrane. The catalysed reaction is an R-cob(III)alamin(out) + ATP + H2O = an R-cob(III)alamin(in) + ADP + phosphate + H(+). In terms of biological role, part of the ABC transporter complex BtuCDF involved in vitamin B12 import. Responsible for energy coupling to the transport system. The chain is Vitamin B12 import ATP-binding protein BtuD from Vibrio parahaemolyticus serotype O3:K6 (strain RIMD 2210633).